A 469-amino-acid chain; its full sequence is 6-phospho-beta-galactosidase (469 aa).

Positions 19, 116, 159, 160, and 297 each coordinate D-galactose 6-phosphate. Catalysis depends on glutamate 160, which acts as the Proton donor. The Nucleophile role is filled by glutamate 375. Residues serine 428, tryptophan 429, lysine 435, and tyrosine 437 each contribute to the D-galactose 6-phosphate site.

This sequence belongs to the glycosyl hydrolase 1 family.

It catalyses the reaction a 6-phospho-beta-D-galactoside + H2O = D-galactose 6-phosphate + an alcohol. It participates in carbohydrate metabolism; lactose degradation; D-galactose 6-phosphate and beta-D-glucose from lactose 6-phosphate: step 1/1. This is 6-phospho-beta-galactosidase from Streptococcus equi subsp. zooepidemicus (strain MGCS10565).